The following is a 396-amino-acid chain: MSDGITDIDENQIQSTYDKVVYSFDDLKLKEELLRGIFGYGFVEPSAIQQRAILPIIEGKDVLAQAQSGTGKTGTFSIAALQNIDEKIKAPQGLILAPTRELALQIQKVVMALAIHMDVKVHACIGGTSLQEDSEALRGGAQIIVGTPGRVFDMIDRRIFKTDNIKMFILDEADEMLSTGFKEQIYNIFTMLPPTSQVVLLSATMPGDVLEVTSKFMKDPVRILVKKDELTLEGIGQYYVNVEEEQYKYDCLTDLYDSISVTQAVIFCNTRRKVEELTERLRENNFTVSAIYSDLQQQERDTIMKEFRSGSSRILISTDLLARGIDVQQVSLVINYDLPSNKENYIHRIGRGGRFGRKGIAINFVTNKDIGAMRELERFYSTQIEELPSSISELFD.

The Q motif signature appears at 22-50 (YSFDDLKLKEELLRGIFGYGFVEPSAIQQ). The region spanning 53–223 (ILPIIEGKDV…SKFMKDPVRI (171 aa)) is the Helicase ATP-binding domain. 66 to 73 (AQSGTGKT) is a binding site for ATP. A DEAD box motif is present at residues 171–174 (DEAD). The Helicase C-terminal domain maps to 234–395 (GIGQYYVNVE…ELPSSISELF (162 aa)).

It belongs to the DEAD box helicase family. eIF4A subfamily. In terms of assembly, component of the eIF4F complex, which composition varies with external and internal environmental conditions. It is composed of at least eIF4A, eIF4E and eIF4G.

The protein localises to the cytoplasm. It catalyses the reaction ATP + H2O = ADP + phosphate + H(+). Its function is as follows. ATP-dependent RNA helicase which is a subunit of the eIF4F complex involved in cap recognition and is required for mRNA binding to ribosome. In the current model of translation initiation, eIF4A unwinds RNA secondary structures in the 5'-UTR of mRNAs which is necessary to allow efficient binding of the small ribosomal subunit, and subsequent scanning for the initiator codon. This chain is ATP-dependent RNA helicase eIF4A (TIF1), found in Kluyveromyces lactis (strain ATCC 8585 / CBS 2359 / DSM 70799 / NBRC 1267 / NRRL Y-1140 / WM37) (Yeast).